Here is a 362-residue protein sequence, read N- to C-terminus: D-alanine--D-alanine ligase (362 aa).

Residues 134-345 form the ATP-grasp domain; it reads KILAQRAGVP…YPDLITRLIR (212 aa). 170–225 is an ATP binding site; that stretch reads GQLGTSNLFVKPSNQGSSVGITHVTDDSNYAEALAEAFKYDDKVLVEEGIVGTEVE. 3 residues coordinate Mg(2+): aspartate 298, glutamate 312, and asparagine 314.

Belongs to the D-alanine--D-alanine ligase family. The cofactor is Mg(2+). Requires Mn(2+) as cofactor.

The protein localises to the cytoplasm. The catalysed reaction is 2 D-alanine + ATP = D-alanyl-D-alanine + ADP + phosphate + H(+). Its pathway is cell wall biogenesis; peptidoglycan biosynthesis. Its function is as follows. Cell wall formation. In Lactobacillus delbrueckii subsp. bulgaricus (strain ATCC 11842 / DSM 20081 / BCRC 10696 / JCM 1002 / NBRC 13953 / NCIMB 11778 / NCTC 12712 / WDCM 00102 / Lb 14), this protein is D-alanine--D-alanine ligase.